The following is a 92-amino-acid chain: UPF0213 protein H16_B0156 (92 aa).

One can recognise a GIY-YIG domain in the interval 5–80 (SAWYLYLLEC…KRLSSTQKRA (76 aa)).

This sequence belongs to the UPF0213 family.

The chain is UPF0213 protein H16_B0156 from Cupriavidus necator (strain ATCC 17699 / DSM 428 / KCTC 22496 / NCIMB 10442 / H16 / Stanier 337) (Ralstonia eutropha).